Consider the following 154-residue polypeptide: Ribonuclease H (154 aa).

An RNase H type-1 domain is found at Glu-3–Val-144. Residues Asp-12, Glu-50, Asp-72, and Asp-136 each coordinate Mg(2+).

This sequence belongs to the RNase H family. Monomer. The cofactor is Mg(2+).

It localises to the cytoplasm. The catalysed reaction is Endonucleolytic cleavage to 5'-phosphomonoester.. Functionally, endonuclease that specifically degrades the RNA of RNA-DNA hybrids. This is Ribonuclease H from Bradyrhizobium diazoefficiens (strain JCM 10833 / BCRC 13528 / IAM 13628 / NBRC 14792 / USDA 110).